The chain runs to 208 residues: Putative RING finger protein 413R (208 aa).

Positions 1 to 87 are disordered; sequence MDAIFYPLPI…RHWSDDDSDR (87 aa). Residues 22–71 show a composition bias toward acidic residues; the sequence is DFQEEDFQEEDFQEEDFQEEDFQEEDEDEEDEEVNEYPSDLDDEYPDSDY. Positions 72–82 are enriched in basic and acidic residues; that stretch reads YDERSDRHWSD. Residues 83-147 are a coiled coil; sequence DDSDRDLDDL…KLTTLSKNLT (65 aa). The segment at 148 to 196 adopts an RING-type zinc-finger fold; the sequence is CIICLTNQVQILTIPCGHLIMCNPCSLNLNNSVCTRGVNSNYEKCPKCR.

This chain is Putative RING finger protein 413R (EF2), found in Acheta domesticus (House cricket).